A 127-amino-acid polypeptide reads, in one-letter code: Large ribosomal subunit protein bL20 (127 aa).

It belongs to the bacterial ribosomal protein bL20 family.

In terms of biological role, binds directly to 23S ribosomal RNA and is necessary for the in vitro assembly process of the 50S ribosomal subunit. It is not involved in the protein synthesizing functions of that subunit. This Opitutus terrae (strain DSM 11246 / JCM 15787 / PB90-1) protein is Large ribosomal subunit protein bL20.